Consider the following 212-residue polypeptide: Glutathione S-transferase P 1 (212 aa).

The GST N-terminal domain occupies 2–83 (PGYVLTYFPV…YLGNKHGLTG (82 aa)). Residues tyrosine 8, arginine 14, tryptophan 39, lysine 47, 54-55 (QL), and 67-68 (QS) each bind glutathione. In terms of domain architecture, GST C-terminal spans 85–206 (NDEERGHIDM…KSDARNKRPI (122 aa)).

The protein belongs to the GST superfamily. Pi family. Homodimer. Expressed only in embryos. Not expressed in liver, lung, heart, kidney and ovary.

It is found in the cytoplasm. The protein localises to the mitochondrion. The protein resides in the nucleus. It catalyses the reaction RX + glutathione = an S-substituted glutathione + a halide anion + H(+). Functionally, conjugation of reduced glutathione to a wide number of exogenous and endogenous hydrophobic electrophiles. Highly active towards 1-chloro-2,4-dinitrobenzene and organic isothiocyanates, but shows no detectable activity towards 1,2-dichloro-4-nitrobenzene, p-nitrobenzylchloride, trans-4-phenyl-3-buten-2-one (tPBO) and ethacrynic acid. May be associated with cellular proliferation. This Xenopus laevis (African clawed frog) protein is Glutathione S-transferase P 1 (gstp1).